We begin with the raw amino-acid sequence, 850 residues long: Translation initiation factor IF-2 (850 aa).

Disordered stretches follow at residues Leu-50–Ser-72 and Phe-92–Val-267. The segment covering Ser-96 to Arg-135 has biased composition (basic and acidic residues). Residues Arg-136–Asp-172 are compositionally biased toward low complexity. Composition is skewed to basic and acidic residues over residues Ala-173–Ala-210 and Thr-234–Arg-243. Over residues Arg-244–Gln-257 the composition is skewed to basic residues. A tr-type G domain is found at Ser-350 to Glu-517. Residues Gly-359–Thr-366 are G1. GTP is bound at residue Gly-359–Thr-366. The interval Gly-384–His-388 is G2. The segment at Asp-405–Gly-408 is G3. Residues Asp-405–His-409 and Asn-459–Asp-462 contribute to the GTP site. Residues Asn-459–Asp-462 are G4. The G5 stretch occupies residues Ser-495 to Lys-497.

Belongs to the TRAFAC class translation factor GTPase superfamily. Classic translation factor GTPase family. IF-2 subfamily.

It is found in the cytoplasm. Functionally, one of the essential components for the initiation of protein synthesis. Protects formylmethionyl-tRNA from spontaneous hydrolysis and promotes its binding to the 30S ribosomal subunits. Also involved in the hydrolysis of GTP during the formation of the 70S ribosomal complex. This Pseudomonas entomophila (strain L48) protein is Translation initiation factor IF-2.